The chain runs to 366 residues: tRNA/tmRNA (uracil-C(5))-methyltransferase (366 aa).

S-adenosyl-L-methionine is bound by residues glutamine 190, tyrosine 218, asparagine 223, glutamate 239, and aspartate 299. The active-site Nucleophile is the cysteine 324. The active-site Proton acceptor is the glutamate 358.

The protein belongs to the class I-like SAM-binding methyltransferase superfamily. RNA M5U methyltransferase family. TrmA subfamily.

It carries out the reaction uridine(54) in tRNA + S-adenosyl-L-methionine = 5-methyluridine(54) in tRNA + S-adenosyl-L-homocysteine + H(+). The catalysed reaction is uridine(341) in tmRNA + S-adenosyl-L-methionine = 5-methyluridine(341) in tmRNA + S-adenosyl-L-homocysteine + H(+). Dual-specificity methyltransferase that catalyzes the formation of 5-methyluridine at position 54 (m5U54) in all tRNAs, and that of position 341 (m5U341) in tmRNA (transfer-mRNA). This is tRNA/tmRNA (uracil-C(5))-methyltransferase from Escherichia coli O17:K52:H18 (strain UMN026 / ExPEC).